Here is a 156-residue protein sequence, read N- to C-terminus: 17.7 kDa class II heat shock protein (156 aa).

In terms of domain architecture, sHSP spans 39–156 (DAKAMAATPA…KPKTIQVQVA (118 aa)).

The protein belongs to the small heat shock protein (HSP20) family. In terms of assembly, may form oligomeric structures.

Its subcellular location is the cytoplasm. In Arabidopsis thaliana (Mouse-ear cress), this protein is 17.7 kDa class II heat shock protein (HSP17.7).